A 678-amino-acid polypeptide reads, in one-letter code: MTPNEFFSIKYHILAKAELKAYIDKLADYLSQQSYLYHTLDKPIISDSDYDKLFRLLQDLVNDNPQFKPINSVLDRVGGEVLAGFETIKHKKKMTSLANVFSLEELRDFYDKIEYDIELECEPKMDGLAISIFYKNGKFDYAVTRGDGIQGEKVSENVKTIRNVPLKLNTSNPPEELEVRGEIILDKQSFLSLNEYMQTHENKTFANPRNAAAGSIRMLDSKVVAKRPLKLYSYGIGYFSKDFVYPETQFELMQLLQSFGFTISDNMFLAKNFSEVEEYHHKMSHQRADLAYDIDGLVFKVNNIKLQDTIGYTARGPKWAIAYKFPAEEVESEVLNVEFQVGRTGAITPVARLKPVAVGGVIVSNATLHNINEIKRKDIRVGDRVIVRRAGDVIPEVVKSLPQYRKSDAQIVEMPTNCPVCDSKIENVNDQAIYRCTGGWHCQAQTTERLKHFVSRKAMDIDKLGAKLIEQLVAANLIKYPADIYKLNFEQLTGLERMAAKSSQNVLDSITKSKEPSLARFIFAIGIKDIGEVSSDALANHFGSLESFRDAKFEELIEINYIGEIIANNIVSFWHDSLNIKIVEEFLAIGIKIQNPVKVEHAYNESFTGKTVVITGSFENYGRTELTQLLKSIGAKVTSSVSKKTDMVICGDNAGSKLTKAQELGVEVILEDNLKDLL.

NAD(+) contacts are provided by residues 47 to 51 (DSDYD), 96 to 97 (SL), and glutamate 122. The active-site N6-AMP-lysine intermediate is lysine 124. Residues arginine 145, glutamate 182, lysine 300, and lysine 324 each contribute to the NAD(+) site. Zn(2+) is bound by residues cysteine 418, cysteine 421, cysteine 436, and cysteine 442. The BRCT domain maps to 602–678 (AYNESFTGKT…ILEDNLKDLL (77 aa)).

It belongs to the NAD-dependent DNA ligase family. LigA subfamily. The cofactor is Mg(2+). Mn(2+) is required as a cofactor.

The enzyme catalyses NAD(+) + (deoxyribonucleotide)n-3'-hydroxyl + 5'-phospho-(deoxyribonucleotide)m = (deoxyribonucleotide)n+m + AMP + beta-nicotinamide D-nucleotide.. Its function is as follows. DNA ligase that catalyzes the formation of phosphodiester linkages between 5'-phosphoryl and 3'-hydroxyl groups in double-stranded DNA using NAD as a coenzyme and as the energy source for the reaction. It is essential for DNA replication and repair of damaged DNA. The sequence is that of DNA ligase from Francisella tularensis subsp. holarctica (strain LVS).